The chain runs to 212 residues: Ribonuclease HII (212 aa).

One can recognise an RNase H type-2 domain in the interval 24–212 (QLVAGVDEVG…PVKKALGIEE (189 aa)). 3 residues coordinate a divalent metal cation: D30, E31, and D122.

This sequence belongs to the RNase HII family. Mn(2+) is required as a cofactor. Requires Mg(2+) as cofactor.

Its subcellular location is the cytoplasm. The catalysed reaction is Endonucleolytic cleavage to 5'-phosphomonoester.. Functionally, endonuclease that specifically degrades the RNA of RNA-DNA hybrids. The sequence is that of Ribonuclease HII from Vibrio campbellii (strain ATCC BAA-1116).